A 442-amino-acid chain; its full sequence is tRNA(Ile)-lysidine synthase (442 aa).

ATP is bound at residue 27–32 (SGGLDS).

This sequence belongs to the tRNA(Ile)-lysidine synthase family.

It localises to the cytoplasm. The catalysed reaction is cytidine(34) in tRNA(Ile2) + L-lysine + ATP = lysidine(34) in tRNA(Ile2) + AMP + diphosphate + H(+). Functionally, ligates lysine onto the cytidine present at position 34 of the AUA codon-specific tRNA(Ile) that contains the anticodon CAU, in an ATP-dependent manner. Cytidine is converted to lysidine, thus changing the amino acid specificity of the tRNA from methionine to isoleucine. This is tRNA(Ile)-lysidine synthase from Photorhabdus laumondii subsp. laumondii (strain DSM 15139 / CIP 105565 / TT01) (Photorhabdus luminescens subsp. laumondii).